The sequence spans 254 residues: Probable glutathione transferase omega-2 (254 aa).

One can recognise a GST N-terminal domain in the interval 25–105; sequence GTIRIYNMRY…YLDDIYPEPR (81 aa). Cysteine 35 (nucleophile) is an active-site residue. Glutathione contacts are provided by residues lysine 62, valine 75, and 89-90; that span reads ES. Residues 110-239 enclose the GST C-terminal domain; it reads DHYEKVQQKL…SQPTETAVEF (130 aa).

This sequence belongs to the GST superfamily. Omega family.

The catalysed reaction is RX + glutathione = an S-substituted glutathione + a halide anion + H(+). The enzyme catalyses L-dehydroascorbate + 2 glutathione = glutathione disulfide + L-ascorbate. It carries out the reaction methylarsonate + 2 glutathione + H(+) = methylarsonous acid + glutathione disulfide + H2O. Functionally, exhibits glutathione-dependent thiol transferase activity. Has dehydroascorbate reductase activity and may contribute to the recycling of ascorbic acid. Participates in the biotransformation of inorganic arsenic and reduces monomethylarsonic acid (MMA). This Caenorhabditis elegans protein is Probable glutathione transferase omega-2 (gsto-2).